The sequence spans 203 residues: LexA repressor (203 aa).

The H-T-H motif DNA-binding region spans 28–47 (IREIGDEFGITAKGAYDHLK). Active-site for autocatalytic cleavage activity residues include serine 127 and lysine 164.

Belongs to the peptidase S24 family. In terms of assembly, homodimer.

It catalyses the reaction Hydrolysis of Ala-|-Gly bond in repressor LexA.. Functionally, represses a number of genes involved in the response to DNA damage (SOS response), including recA and lexA. In the presence of single-stranded DNA, RecA interacts with LexA causing an autocatalytic cleavage which disrupts the DNA-binding part of LexA, leading to derepression of the SOS regulon and eventually DNA repair. The protein is LexA repressor of Leptospira interrogans serogroup Icterohaemorrhagiae serovar copenhageni (strain Fiocruz L1-130).